The following is a 188-amino-acid chain: Peptidyl-tRNA hydrolase (188 aa).

Tyr15 is a tRNA binding site. Catalysis depends on His20, which acts as the Proton acceptor. Positions 63, 65, and 111 each coordinate tRNA.

This sequence belongs to the PTH family. In terms of assembly, monomer.

The protein localises to the cytoplasm. It carries out the reaction an N-acyl-L-alpha-aminoacyl-tRNA + H2O = an N-acyl-L-amino acid + a tRNA + H(+). Functionally, hydrolyzes ribosome-free peptidyl-tRNAs (with 1 or more amino acids incorporated), which drop off the ribosome during protein synthesis, or as a result of ribosome stalling. Catalyzes the release of premature peptidyl moieties from peptidyl-tRNA molecules trapped in stalled 50S ribosomal subunits, and thus maintains levels of free tRNAs and 50S ribosomes. The chain is Peptidyl-tRNA hydrolase from Hydrogenobaculum sp. (strain Y04AAS1).